The sequence spans 370 residues: Ganglioside-induced differentiation-associated protein 1-like 1 (370 aa).

Positions 45 to 129 (ESLVLYHWTQ…YVERTFTGEH (85 aa)) constitute a GST N-terminal domain. Residues 177-344 (PKYATAEIRR…RLVKRKPPSF (168 aa)) enclose the GST C-terminal domain.

Belongs to the GST superfamily.

This is Ganglioside-induced differentiation-associated protein 1-like 1 (Gdap1l1) from Mus musculus (Mouse).